The following is a 183-amino-acid chain: Peptide deformylase (183 aa).

2 residues coordinate Fe cation: cysteine 110 and histidine 153. Glutamate 154 is a catalytic residue. Residue histidine 157 participates in Fe cation binding.

Belongs to the polypeptide deformylase family. Fe(2+) is required as a cofactor.

The catalysed reaction is N-terminal N-formyl-L-methionyl-[peptide] + H2O = N-terminal L-methionyl-[peptide] + formate. Removes the formyl group from the N-terminal Met of newly synthesized proteins. Requires at least a dipeptide for an efficient rate of reaction. N-terminal L-methionine is a prerequisite for activity but the enzyme has broad specificity at other positions. The polypeptide is Peptide deformylase (Listeria monocytogenes serovar 1/2a (strain ATCC BAA-679 / EGD-e)).